The primary structure comprises 175 residues: Putative transmembrane protein ORF175 (175 aa).

4 helical membrane-spanning segments follow: residues 14–34 (LGIV…GSFM), 58–78 (VLSN…AIAF), 101–121 (IVVA…FALF), and 142–162 (ITPF…VLSI).

The protein localises to the host membrane. This Acidianus two-tailed virus (ATV) protein is Putative transmembrane protein ORF175.